Reading from the N-terminus, the 145-residue chain is ATP synthase epsilon chain (145 aa).

The protein belongs to the ATPase epsilon chain family. F-type ATPases have 2 components, CF(1) - the catalytic core - and CF(0) - the membrane proton channel. CF(1) has five subunits: alpha(3), beta(3), gamma(1), delta(1), epsilon(1). CF(0) has three main subunits: a, b and c.

Its subcellular location is the cell inner membrane. Produces ATP from ADP in the presence of a proton gradient across the membrane. The polypeptide is ATP synthase epsilon chain (Francisella tularensis subsp. holarctica (strain FTNF002-00 / FTA)).